Here is a 229-residue protein sequence, read N- to C-terminus: GTP-binding protein Di-Ras3 (229 aa).

Residues 44–51 (GTAGVGKS), 63–69 (RHEYLPT), 91–95 (DSKSG), 152–155 (NKSD), and 182–183 (AK) each bind GTP. An Effector region motif is present at residues 66-74 (YLPTIENTY). A Cysteine methyl ester modification is found at Cys226. A lipid anchor (S-geranylgeranyl cysteine) is attached at Cys226. The propeptide at 227-229 (IIM) is removed in mature form.

The protein belongs to the small GTPase superfamily. Di-Ras family. In terms of tissue distribution, expressed in normal ovarian and breast epithelial cells but not in ovarian and breast cancers.

It is found in the cell membrane. The polypeptide is GTP-binding protein Di-Ras3 (DIRAS3) (Homo sapiens (Human)).